We begin with the raw amino-acid sequence, 186 residues long: Apolipophorin-3 (186 aa).

An N-terminal signal peptide occupies residues 1–18; it reads MAAKYVFVVAACSALAQA. A propeptide spanning residues 19-23 is cleaved from the precursor; sequence GIVRR.

Belongs to the insect apolipophorin-3 family. Equilibrium between a soluble monomer and a bound lipoprotein form. Apolipophorin-3 associates with lipophorin during lipid loading until each particle contains 9 or 14 molecules of apolipophorin-3. Expressed in hemolymph. Also found in hemocytes and fat body.

Its subcellular location is the secreted. Functionally, assists in the loading of diacylglycerol, generated from triacylglycerol stores in the fat body through the action of adipokinetic hormone, into lipophorin, the hemolymph lipoprotein. It increases the lipid carrying capacity of lipophorin by covering the expanding hydrophobic surface resulting from diacylglycerol uptake. It thus plays a critical role in the transport of lipids during flight in several species of insects. Has antibacterial activity against the Gram-positive bacteria L.monocytogenes (MIC=6.5 uM). Lacks antibacterial activity against the Gram-positive bacteria B.circulans, M.luteus, S.aureus, and S.lutea, and the Gram-negative bacteria E.coli D31, E.coli ATCC 25922, and S.typhimurium. Lacks antifungal activity against S.cerevisiae, P.pastoris, Z.marxianus, C.albicans, C.wickerhamii, A.niger, F.oxysporum, and T.harizianum. The protein is Apolipophorin-3 of Galleria mellonella (Greater wax moth).